A 503-amino-acid polypeptide reads, in one-letter code: MRLTVTAKEGGSIKADALVLFISTKDLKKEAGKLLRSLGADEGALKDFKASAGELVMAYRAASGKSPLRLLLAGIGDGLKLEEFRKAAEAAARKAVDLKIGILALDCSGAAQWAKQLKCKSDELAAVLAGAAQYGAYRFDRLKSGKLDKKKDESKPKGISELVFAGCGTQLGAIENGANAGMIVGSCQNAARDLVNLPGNHLSAEDLADAAREAGKRGGFEVTVFDKKKITELKMGGLLAVNKGSEQPPTFTIMDYKPEGKAKKTIALVGKGVTFDSGGISLKPAQGMEEMKSDMAGAACVIEAVEAAARLALPVRVIGFVPSTDNMPSGSAQMPGDVITTMSGITVEVGNTDAEGRLILADALTYAKQEYNPDVMIDLATLTGACIVALGYPVAGLFSNDEALADRLFKSGQASGEKVWQLPLWDEYAELIKSDVADVHNTGGRGAGSITAAKFLEKFIDGHKHWAHVDIAGPAFPTKGGSKVSGATGFGVRLLVDLLQSWS.

2 residues coordinate Mn(2+): Lys-271 and Asp-276. Lys-283 is a catalytic residue. 3 residues coordinate Mn(2+): Asp-294, Asp-353, and Glu-355. Residue Arg-357 is part of the active site.

The protein belongs to the peptidase M17 family. Requires Mn(2+) as cofactor.

The protein resides in the cytoplasm. It catalyses the reaction Release of an N-terminal amino acid, Xaa-|-Yaa-, in which Xaa is preferably Leu, but may be other amino acids including Pro although not Arg or Lys, and Yaa may be Pro. Amino acid amides and methyl esters are also readily hydrolyzed, but rates on arylamides are exceedingly low.. The catalysed reaction is Release of an N-terminal amino acid, preferentially leucine, but not glutamic or aspartic acids.. Its function is as follows. Presumably involved in the processing and regular turnover of intracellular proteins. Catalyzes the removal of unsubstituted N-terminal amino acids from various peptides. This Chlorobaculum parvum (strain DSM 263 / NCIMB 8327) (Chlorobium vibrioforme subsp. thiosulfatophilum) protein is Probable cytosol aminopeptidase.